The sequence spans 58 residues: Galectin-1 (58 aa).

In terms of domain architecture, Galectin spans 2–58; the sequence is GITXTSLHVAPGARLAVKGDIPAGAKSWVINLGKGENDIMLHFNARFDAHGDIRTIV. A beta-D-galactoside is bound by residues 43–47 and His-51; that span reads HFNAR.

As to quaternary structure, monomer. In terms of tissue distribution, detected in most tissues, most abundantly in skin.

Its subcellular location is the secreted. The protein localises to the extracellular space. It localises to the extracellular matrix. May regulate cell apoptosis and cell differentiation. Binds beta-galactoside and a wide array of complex carbohydrates. The chain is Galectin-1 from Podarcis hispanicus (Iberian wall lizard).